The chain runs to 233 residues: Homeobox protein Hox-B6b (233 aa).

Positions 136–141 (IYPWMQ) match the Antp-type hexapeptide motif. Residues 155–214 (GRRGRQTYTRYQTLELEKEFHFNRYLTRRRRIEISHALCLTERQIKIWFQNRRMKWKKEN) constitute a DNA-binding region (homeobox). Residues 213 to 233 (ENKLLNPSKTPEEEEEAEKKS) are disordered. The span at 224-233 (EEEEEAEKKS) shows a compositional bias: acidic residues.

It belongs to the Antp homeobox family.

It localises to the nucleus. Sequence-specific transcription factor which is part of a developmental regulatory system that provides cells with specific positional identities on the anterior-posterior axis. This chain is Homeobox protein Hox-B6b (hoxb6b), found in Takifugu rubripes (Japanese pufferfish).